The sequence spans 293 residues: Acetyl-coenzyme A carboxylase carboxyl transferase subunit beta (293 aa).

Residues 29 to 293 (LWSKCPECGL…GSKSLELTNA (265 aa)) enclose the CoA carboxyltransferase N-terminal domain. Zn(2+)-binding residues include Cys33, Cys36, Cys52, and Cys55. The C4-type zinc-finger motif lies at 33–55 (CPECGLVVYLKDLRLNASVCAGC).

The protein belongs to the AccD/PCCB family. As to quaternary structure, acetyl-CoA carboxylase is a heterohexamer composed of biotin carboxyl carrier protein (AccB), biotin carboxylase (AccC) and two subunits each of ACCase subunit alpha (AccA) and ACCase subunit beta (AccD). Zn(2+) is required as a cofactor.

It is found in the cytoplasm. It carries out the reaction N(6)-carboxybiotinyl-L-lysyl-[protein] + acetyl-CoA = N(6)-biotinyl-L-lysyl-[protein] + malonyl-CoA. It participates in lipid metabolism; malonyl-CoA biosynthesis; malonyl-CoA from acetyl-CoA: step 1/1. Its function is as follows. Component of the acetyl coenzyme A carboxylase (ACC) complex. Biotin carboxylase (BC) catalyzes the carboxylation of biotin on its carrier protein (BCCP) and then the CO(2) group is transferred by the transcarboxylase to acetyl-CoA to form malonyl-CoA. This Synechococcus sp. (strain CC9902) protein is Acetyl-coenzyme A carboxylase carboxyl transferase subunit beta.